Reading from the N-terminus, the 1113-residue chain is Coiled-coil domain-containing protein 158 (1113 aa).

Residues 1–14 are compositionally biased toward polar residues; sequence MESKAWESNNEDLL. The interval 1-26 is disordered; it reads MESKAWESNNEDLLSSSGVTSNGGSS. Over residues 15-26 the composition is skewed to low complexity; sequence SSSGVTSNGGSS. 2 coiled-coil regions span residues 72-183 and 243-833; these read GKEH…LSHE and VEDQ…QEQE. Disordered stretches follow at residues 848–902 and 955–1062; these read LQGP…DPTR and CHRS…IETT. Composition is skewed to polar residues over residues 867–894, 955–974, 994–1017, 1024–1040, and 1053–1062; these read ASVT…TKAN, CHRS…SSET, FTFT…SSPK, LLTS…SQYR, and DSQSPPIETT. A coiled-coil region spans residues 1061–1113; it reads TTGKTCRKLQNRLESLQTLVEDLQLKNQAMSSMIRNQEKRIQKVKDQEKMLLK.

The polypeptide is Coiled-coil domain-containing protein 158 (CCDC158) (Homo sapiens (Human)).